We begin with the raw amino-acid sequence, 149 residues long: Phosphoribosyl-AMP cyclohydrolase (149 aa).

A Mg(2+)-binding site is contributed by aspartate 92. Residue cysteine 93 coordinates Zn(2+). Mg(2+) contacts are provided by aspartate 94 and aspartate 96. Positions 111 and 118 each coordinate Zn(2+).

Belongs to the PRA-CH family. Homodimer. Mg(2+) serves as cofactor. The cofactor is Zn(2+).

Its subcellular location is the cytoplasm. It catalyses the reaction 1-(5-phospho-beta-D-ribosyl)-5'-AMP + H2O = 1-(5-phospho-beta-D-ribosyl)-5-[(5-phospho-beta-D-ribosylamino)methylideneamino]imidazole-4-carboxamide. The protein operates within amino-acid biosynthesis; L-histidine biosynthesis; L-histidine from 5-phospho-alpha-D-ribose 1-diphosphate: step 3/9. Its function is as follows. Catalyzes the hydrolysis of the adenine ring of phosphoribosyl-AMP. The protein is Phosphoribosyl-AMP cyclohydrolase of Rhizobium rhizogenes (strain K84 / ATCC BAA-868) (Agrobacterium radiobacter).